A 292-amino-acid polypeptide reads, in one-letter code: Elongation factor Ts (292 aa).

Residues 82 to 85 (TDFV) are involved in Mg(2+) ion dislocation from EF-Tu.

This sequence belongs to the EF-Ts family.

Its subcellular location is the cytoplasm. In terms of biological role, associates with the EF-Tu.GDP complex and induces the exchange of GDP to GTP. It remains bound to the aminoacyl-tRNA.EF-Tu.GTP complex up to the GTP hydrolysis stage on the ribosome. The sequence is that of Elongation factor Ts from Legionella pneumophila subsp. pneumophila (strain Philadelphia 1 / ATCC 33152 / DSM 7513).